The primary structure comprises 147 residues: uncharacterized protein (147 aa).

2 helical membrane-spanning segments follow: residues 42-62 and 64-84; these read WASL…SPEP and LILQ…ATAF.

It is found in the cell membrane. This is an uncharacterized protein from Bacillus subtilis (strain 168).